The chain runs to 494 residues: MIKYLYVILLGLLLSGCQPAEVVEIEASPKAQKRTVLKVGTLYGPQIYVNNSQGETGFDYEMANRFADYLGVSLEMIPFTDRKQLFKALKDNDIDIIAAGIAKTPGRGEQFKMGPTLYKVNQVLVYREGTPEPKDIGTLSGEITVMSNSSSVNTLTQLQKDYPELLWNQVNDKDNEELFALIAKGELNYTISDSNSLLINQRFLPELRAGMILEEKIEVVWLLPPKNSDKLMSQLLAFWHNEQRAGTLEHLNEKYFGHVKRFDYVDTRAFIRAIDNVLPAYRSLFETYSGELDWRKLAAASYQESHWNPNARSKTGVRGMMMLTQPTASYVGVSDRTDAEQSIRGGAIYLKDMIERLPESISDSQRIWFALAAYNIGMGHVEDARRLAVSMDMDPDAWRDVKKVLPLLQQRKYYKQTRYGYARGSQAVHYVDSIRRYYDTLVWVDNQTKKMEVIEAPVEILADKVDANDNIKQSLASDSKTNNTLKPKLGAGQP.

The first 20 residues, 1-20 (MIKYLYVILLGLLLSGCQPA), serve as a signal peptide directing secretion. The non-LT domain stretch occupies residues 21–259 (EVVEIEASPK…HLNEKYFGHV (239 aa)). The LT domain stretch occupies residues 260–494 (KRFDYVDTRA…LKPKLGAGQP (235 aa)). The active site involves E304. Residues 473–485 (QSLASDSKTNNTL) are compositionally biased toward polar residues. A disordered region spans residues 473–494 (QSLASDSKTNNTLKPKLGAGQP).

In the N-terminal section; belongs to the bacterial solute-binding protein 3 family. The protein in the C-terminal section; belongs to the transglycosylase Slt family.

It localises to the cell outer membrane. It catalyses the reaction Exolytic cleavage of the (1-&gt;4)-beta-glycosidic linkage between N-acetylmuramic acid (MurNAc) and N-acetylglucosamine (GlcNAc) residues in peptidoglycan, from either the reducing or the non-reducing ends of the peptidoglycan chains, with concomitant formation of a 1,6-anhydrobond in the MurNAc residue.. Functionally, murein-degrading enzyme that degrades murein glycan strands and insoluble, high-molecular weight murein sacculi, with the concomitant formation of a 1,6-anhydromuramoyl product. Lytic transglycosylases (LTs) play an integral role in the metabolism of the peptidoglycan (PG) sacculus. Their lytic action creates space within the PG sacculus to allow for its expansion as well as for the insertion of various structures such as secretion systems and flagella. The sequence is that of Membrane-bound lytic murein transglycosylase F from Shewanella denitrificans (strain OS217 / ATCC BAA-1090 / DSM 15013).